The sequence spans 549 residues: MKNINPTQTAAWQALQKHFDEMKDVTIADLFAKDGDRFSKFSATFDDQMLVDYSKNRITEETLAKLQDLAKECDLAGAIKSMFSGEKINRTENRAVLHVALRNRSNTPILVDGKDVMPEVNAVLEKMKTFSEAIISGEWKGYTGKAITDVVNIGIGGSDLGPYMVTEALRPYKNHLNMHFVSNVDGTHIAEVLKKVNSETTLFLVASKTFTTQETMTNAHSARDWFLKAAGDEKHVAKHFAALSTNAKAVGEFGIDTANMFEFWDWVGGRYSLWSAIGLSIVLSIGFDNFVELLSGAHAMDKHFSTTPAEKNLPVLLALIGIWYNNFFGAETEAILPYDQYMHRFAAYFQQGNMESNGKYVDRNGNVVDYQTGPIIWGEPGTNGQHAFYQLIHQGTKIVPCDFIAPAITHNPLSDHHQKLLSNFFAQTEALAFGKSREVVEQEYRDQGKDPATLDYVVPFKVFEGNRPTNSILLREITPFSLGALIALYEHKIFTQGVILNIFTFDQWGVELGKQLANRILPELKDDKEISSHDSSTNGLINRYKAWRG.

Residues K80, K228, and K234 each carry the N6-acetyllysine modification. The Proton donor role is filled by E355. Residues H386 and K514 contribute to the active site.

The protein belongs to the GPI family.

It is found in the cytoplasm. It catalyses the reaction alpha-D-glucose 6-phosphate = beta-D-fructose 6-phosphate. Its pathway is carbohydrate biosynthesis; gluconeogenesis. It functions in the pathway carbohydrate degradation; glycolysis; D-glyceraldehyde 3-phosphate and glycerone phosphate from D-glucose: step 2/4. Its function is as follows. Catalyzes the reversible isomerization of glucose-6-phosphate to fructose-6-phosphate. In Escherichia coli O17:K52:H18 (strain UMN026 / ExPEC), this protein is Glucose-6-phosphate isomerase.